Here is a 300-residue protein sequence, read N- to C-terminus: 33 kDa chaperonin (300 aa).

Cystine bridges form between Cys-247/Cys-249 and Cys-280/Cys-283.

It belongs to the HSP33 family. In terms of processing, under oxidizing conditions two disulfide bonds are formed involving the reactive cysteines. Under reducing conditions zinc is bound to the reactive cysteines and the protein is inactive.

The protein resides in the cytoplasm. Redox regulated molecular chaperone. Protects both thermally unfolding and oxidatively damaged proteins from irreversible aggregation. Plays an important role in the bacterial defense system toward oxidative stress. The chain is 33 kDa chaperonin from Prochlorococcus marinus (strain MIT 9515).